The chain runs to 126 residues: Methylglyoxal synthase (126 aa).

The 126-residue stretch at 1–126 (MAGSKCLALI…AIKLLPTLEA (126 aa)) folds into the MGS-like domain. Substrate is bound by residues histidine 12, lysine 16, 38–41 (TGTT), and 59–60 (SG). The active-site Proton donor/acceptor is aspartate 65. Histidine 92 serves as a coordination point for substrate.

This sequence belongs to the methylglyoxal synthase family.

The enzyme catalyses dihydroxyacetone phosphate = methylglyoxal + phosphate. Catalyzes the formation of methylglyoxal from dihydroxyacetone phosphate. This chain is Methylglyoxal synthase, found in Rhizobium etli (strain ATCC 51251 / DSM 11541 / JCM 21823 / NBRC 15573 / CFN 42).